We begin with the raw amino-acid sequence, 262 residues long: Shikimate dehydrogenase (NADP(+)) (262 aa).

Shikimate is bound by residues 15-17 (SRS) and Thr62. The Proton acceptor role is filled by Lys66. Position 78 (Glu78) interacts with NADP(+). Shikimate is bound by residues Asn87 and Asp102. Residues 126–130 (GAGGA), 150–155 (NRTLAR), and Met214 each bind NADP(+). Tyr216 contacts shikimate. Gly236 contributes to the NADP(+) binding site.

The protein belongs to the shikimate dehydrogenase family. Homodimer.

It carries out the reaction shikimate + NADP(+) = 3-dehydroshikimate + NADPH + H(+). Its pathway is metabolic intermediate biosynthesis; chorismate biosynthesis; chorismate from D-erythrose 4-phosphate and phosphoenolpyruvate: step 4/7. Involved in the biosynthesis of the chorismate, which leads to the biosynthesis of aromatic amino acids. Catalyzes the reversible NADPH linked reduction of 3-dehydroshikimate (DHSA) to yield shikimate (SA). This chain is Shikimate dehydrogenase (NADP(+)), found in Acinetobacter baumannii (strain SDF).